Consider the following 162-residue polypeptide: Photosystem II extrinsic protein V (162 aa).

The N-terminal stretch at 1–25 (MFKKFSALFTLLFTLCLVNPMLVYS) is a signal peptide. Residues C62, C65, H66, and H117 each contribute to the heme c site.

It belongs to the cytochrome c family. PsbV subfamily. PSII is composed of 1 copy each of membrane proteins PsbA, PsbB, PsbC, PsbD, PsbE, PsbF, PsbH, PsbI, PsbJ, PsbK, PsbL, PsbM, PsbT, PsbX, PsbY, PsbZ, Psb30/Ycf12, at least 3 peripheral proteins of the oxygen-evolving complex and a large number of cofactors. It forms dimeric complexes. Requires heme c as cofactor.

The protein localises to the plastid. Its subcellular location is the chloroplast thylakoid membrane. Its function is as follows. One of the extrinsic, lumenal subunits of photosystem II (PSII). PSII is a light-driven water plastoquinone oxidoreductase, using light energy to abstract electrons from H(2)O, generating a proton gradient subsequently used for ATP formation. The extrinsic proteins stabilize the structure of photosystem II oxygen-evolving complex (OEC), the ion environment of oxygen evolution and protect the OEC against heat-induced inactivation. The chain is Photosystem II extrinsic protein V from Guillardia theta (Cryptophyte).